The following is an 87-amino-acid chain: Small ribosomal subunit protein uS17 (87 aa).

The protein belongs to the universal ribosomal protein uS17 family. In terms of assembly, part of the 30S ribosomal subunit.

In terms of biological role, one of the primary rRNA binding proteins, it binds specifically to the 5'-end of 16S ribosomal RNA. The protein is Small ribosomal subunit protein uS17 of Neisseria meningitidis serogroup C (strain 053442).